Here is a 151-residue protein sequence, read N- to C-terminus: UPF0336 protein Franean1_6066 (151 aa).

Residues 8–127 enclose the MaoC-like domain; the sequence is VGRSYTSDVP…NEVLVTSYEF (120 aa).

This sequence belongs to the UPF0336 family.

The polypeptide is UPF0336 protein Franean1_6066 (Parafrankia sp. (strain EAN1pec)).